A 453-amino-acid polypeptide reads, in one-letter code: mRNA cleavage and polyadenylation factor CLP1 (453 aa).

ATP-binding positions include Glu31, Lys70, and 146-151 (NSGKTS).

This sequence belongs to the Clp1 family. Clp1 subfamily. As to quaternary structure, component of a pre-mRNA cleavage factor complex. Interacts directly with PCF11.

It is found in the nucleus. In terms of biological role, required for endonucleolytic cleavage during polyadenylation-dependent pre-mRNA 3'-end formation. The protein is mRNA cleavage and polyadenylation factor CLP1 of Scheffersomyces stipitis (strain ATCC 58785 / CBS 6054 / NBRC 10063 / NRRL Y-11545) (Yeast).